The primary structure comprises 202 residues: MATVLRIDSSALSNGSHSKALADFFQTQWLEKHPTDSFQTLDLSQTPPPHLSEATIGAMFTPTEERSKEQTQQLALSTDYIEQLKKADVILISTPMYNFGIPSTLKAYLDHSLRVGETFVYTDKGPKGLLEGKKAIVVAASGGDYTQSPLDAMNFVTPYLKTALGFIGIEDVTLVEAPGMAGDEASINKSIKQAKQTLQNCL.

FMN contacts are provided by residues Ser10, 16–18, and 96–99; these read SHS and MYNF.

This sequence belongs to the azoreductase type 1 family. Homodimer. FMN is required as a cofactor.

The catalysed reaction is 2 a quinone + NADH + H(+) = 2 a 1,4-benzosemiquinone + NAD(+). It carries out the reaction N,N-dimethyl-1,4-phenylenediamine + anthranilate + 2 NAD(+) = 2-(4-dimethylaminophenyl)diazenylbenzoate + 2 NADH + 2 H(+). Quinone reductase that provides resistance to thiol-specific stress caused by electrophilic quinones. Functionally, also exhibits azoreductase activity. Catalyzes the reductive cleavage of the azo bond in aromatic azo compounds to the corresponding amines. The chain is FMN-dependent NADH:quinone oxidoreductase from Hydrogenovibrio crunogenus (strain DSM 25203 / XCL-2) (Thiomicrospira crunogena).